We begin with the raw amino-acid sequence, 486 residues long: N-succinylglutamate 5-semialdehyde dehydrogenase (486 aa).

220–225 (GSSRTG) provides a ligand contact to NAD(+). Catalysis depends on residues E243 and C277.

The protein belongs to the aldehyde dehydrogenase family. AstD subfamily.

It carries out the reaction N-succinyl-L-glutamate 5-semialdehyde + NAD(+) + H2O = N-succinyl-L-glutamate + NADH + 2 H(+). It functions in the pathway amino-acid degradation; L-arginine degradation via AST pathway; L-glutamate and succinate from L-arginine: step 4/5. Catalyzes the NAD-dependent reduction of succinylglutamate semialdehyde into succinylglutamate. This is N-succinylglutamate 5-semialdehyde dehydrogenase from Shewanella baltica (strain OS155 / ATCC BAA-1091).